The following is an 85-amino-acid chain: Large ribosomal subunit protein bL27 (85 aa).

Residues 1–24 (MAHKKGQGSSRNGRDSNAQRRGVK) form a disordered region.

It belongs to the bacterial ribosomal protein bL27 family.

In Syntrophus aciditrophicus (strain SB), this protein is Large ribosomal subunit protein bL27.